We begin with the raw amino-acid sequence, 102 residues long: Small ribosomal subunit protein uS10 (102 aa).

It belongs to the universal ribosomal protein uS10 family. In terms of assembly, part of the 30S ribosomal subunit.

In terms of biological role, involved in the binding of tRNA to the ribosomes. In Streptococcus pneumoniae (strain CGSP14), this protein is Small ribosomal subunit protein uS10.